Here is a 41-residue protein sequence, read N- to C-terminus: Large ribosomal subunit protein bL36 (41 aa).

Belongs to the bacterial ribosomal protein bL36 family.

The protein is Large ribosomal subunit protein bL36 of Zymomonas mobilis subsp. mobilis (strain ATCC 31821 / ZM4 / CP4).